Reading from the N-terminus, the 274-residue chain is Acyl-[acyl-carrier-protein]--UDP-N-acetylglucosamine O-acyltransferase (274 aa).

This sequence belongs to the transferase hexapeptide repeat family. LpxA subfamily. Homotrimer.

The protein resides in the cytoplasm. It catalyses the reaction a (3R)-hydroxyacyl-[ACP] + UDP-N-acetyl-alpha-D-glucosamine = a UDP-3-O-[(3R)-3-hydroxyacyl]-N-acetyl-alpha-D-glucosamine + holo-[ACP]. Its pathway is glycolipid biosynthesis; lipid IV(A) biosynthesis; lipid IV(A) from (3R)-3-hydroxytetradecanoyl-[acyl-carrier-protein] and UDP-N-acetyl-alpha-D-glucosamine: step 1/6. Functionally, involved in the biosynthesis of lipid A, a phosphorylated glycolipid that anchors the lipopolysaccharide to the outer membrane of the cell. The polypeptide is Acyl-[acyl-carrier-protein]--UDP-N-acetylglucosamine O-acyltransferase (Bartonella henselae (strain ATCC 49882 / DSM 28221 / CCUG 30454 / Houston 1) (Rochalimaea henselae)).